The chain runs to 134 residues: uncharacterized protein (134 aa).

This is an uncharacterized protein from Methanocaldococcus jannaschii (strain ATCC 43067 / DSM 2661 / JAL-1 / JCM 10045 / NBRC 100440) (Methanococcus jannaschii).